Consider the following 87-residue polypeptide: Small ribosomal subunit protein eS21 (87 aa).

Belongs to the eukaryotic ribosomal protein eS21 family. In terms of assembly, component of the small ribosomal subunit. Mature ribosomes consist of a small (40S) and a large (60S) subunit. The 40S subunit contains about 33 different proteins and 1 molecule of RNA (18S). The 60S subunit contains about 49 different proteins and 3 molecules of RNA (25S, 5.8S and 5S).

The protein resides in the cytoplasm. In terms of biological role, required for the processing of the 20S rRNA-precursor to mature 18S rRNA in a late step of the maturation of 40S ribosomal subunits. Has a physiological role leading to 18S rRNA stability. This is Small ribosomal subunit protein eS21 (RPS21) from Candida albicans (Yeast).